The sequence spans 326 residues: Cyclin-dependent kinase 6 (326 aa).

The residue at position 1 (Met1) is an N-acetylmethionine. Phosphotyrosine occurs at positions 13 and 24. A Protein kinase domain is found at 13 to 300 (YECVAEIGEG…AYSALSHPYF (288 aa)). ATP-binding positions include 19 to 27 (IGEGAYGKV) and Lys43. Phosphothreonine is present on residues Thr49 and Thr70. Asp145 (proton acceptor) is an active-site residue. Residue Thr177 is modified to Phosphothreonine. Lys264 carries the post-translational modification N6-acetyllysine. Residue Thr325 is modified to Phosphothreonine.

It belongs to the protein kinase superfamily. CMGC Ser/Thr protein kinase family. CDC2/CDKX subfamily. As to quaternary structure, interaction with D-type G1 cyclins. Cyclin binding promotes enzyme activation by phosphorylation at Thr-177. Binds to RUNX1, CDKN2D, FBXO7 and CDKN2C/p18-INK4c. Forms a cytoplasmic complex with Hsp90/HSP90AB1 and CDC37. FBXO7-binding promotes D-type cyclin binding. Interacts with Kaposi's sarcoma herpesvirus (KSHV) V-cyclin and herpesvirus saimiri (V-cyclin/ECLF2); the CDK6/V-cyclin complex phosphorylates NPM1 and thus lead to viral reactivation by reducing viral LANA levels. Post-translationally, thr-177 phosphorylation and Tyr-24 dephosphorylation promotes kinase activity. Expressed ubiquitously. Accumulates in squamous cell carcinomas, proliferating hematopoietic progenitor cells, beta-cells of pancreatic islets of Langerhans, and neuroblastomas. Reduced levels in differentiating cells.

It localises to the cytoplasm. The protein localises to the nucleus. It is found in the cell projection. Its subcellular location is the ruffle. The protein resides in the cytoskeleton. It localises to the microtubule organizing center. The protein localises to the centrosome. It carries out the reaction L-seryl-[protein] + ATP = O-phospho-L-seryl-[protein] + ADP + H(+). The catalysed reaction is L-threonyl-[protein] + ATP = O-phospho-L-threonyl-[protein] + ADP + H(+). Its activity is regulated as follows. Inhibited by INK4 proteins (CDKN2C/p18-INK4c), aminopurvalanol, PD0332991, 4-(Pyrazol-4-yl)-pyrimidines and fisetin, a flavonol inhibitor. Activated by Thr-177 phosphorylation and Tyr-24 dephosphorylation. Stimulated by cyclin from herpesvirus saimiri (V-cyclin/ECLF2). Rapidly down-regulated prior to cell differentiation (e.g. erythroid and osteoblast). Serine/threonine-protein kinase involved in the control of the cell cycle and differentiation; promotes G1/S transition. Phosphorylates pRB/RB1 and NPM1. Interacts with D-type G1 cyclins during interphase at G1 to form a pRB/RB1 kinase and controls the entrance into the cell cycle. Involved in initiation and maintenance of cell cycle exit during cell differentiation; prevents cell proliferation and negatively regulates cell differentiation, but is required for the proliferation of specific cell types (e.g. erythroid and hematopoietic cells). Essential for cell proliferation within the dentate gyrus of the hippocampus and the subventricular zone of the lateral ventricles. Required during thymocyte development. Promotes the production of newborn neurons, probably by modulating G1 length. Promotes, at least in astrocytes, changes in patterns of gene expression, changes in the actin cytoskeleton including loss of stress fibers, and enhanced motility during cell differentiation. Prevents myeloid differentiation by interfering with RUNX1 and reducing its transcription transactivation activity, but promotes proliferation of normal myeloid progenitors. Delays senescence. Promotes the proliferation of beta-cells in pancreatic islets of Langerhans. May play a role in the centrosome organization during the cell cycle phases. This Homo sapiens (Human) protein is Cyclin-dependent kinase 6 (CDK6).